The chain runs to 450 residues: Probable ECA polymerase (450 aa).

The next 11 helical transmembrane spans lie at 6 to 26 (FSGLFVVWLLCTLFIATLTWF), 37 to 57 (VFFSLLFLLTFFFGFPLTSVL), 63 to 83 (VGVAPPEILLQALLSAGCFYA), 118 to 138 (VILMGIALVSVGIFFMHNGFL), 155 to 175 (GVALKRFFYFFIPAMLVVYFL), 181 to 201 (AWLFFLVSTVAFGLLTYMIVG), 207 to 227 (IIIAFAIFLFIGIIRGWISLW), 228 to 248 (MLAAAGVLGIVGMFWLALKRY), 341 to 361 (LVVMGGALFIPLGAIVVGLII), 378 to 398 (YKAAILHSFCFGAIFNMIVLA), and 410 to 430 (VFFIVVFGACLMIAKLLYWLF).

Belongs to the WzyE family. As to quaternary structure, probably part of a complex composed of WzxE, WzyE and WzzE.

Its subcellular location is the cell inner membrane. It functions in the pathway bacterial outer membrane biogenesis; enterobacterial common antigen biosynthesis. Functionally, probably involved in the polymerization of enterobacterial common antigen (ECA) trisaccharide repeat units. This Shigella boydii serotype 18 (strain CDC 3083-94 / BS512) protein is Probable ECA polymerase.